We begin with the raw amino-acid sequence, 537 residues long: MAAVAVAAAAAALRARILQVSSKVNSSWQPASSFSSSSVPTVKLFIDGKFIESKSDKWIDIHNPATNEVIGRVPESTKAEMDAAVSSCKRTFPAWADTSILSRQQVLLRYQQLIKENLKEIARLIMLEQGKTLADAEGDVFRGLQVVEHACSVTSLMLGDTMPSITKDMDLYSYRLPLGVCAGIAPFNFPAMIPLWMFPMAMVCGNTFLMKPSERVPGATMLLAKLFQDSGAPDGTLNIIHGQHEAVNFICDHPDIKAISFVGSNQAGEYIFERGSRHGKRVQANMGAKNHGVVMPDANKENTLNQLVGAAFGAAGQRCMALSTAILVGEAKKWLPELVERAKKLRVNAGDQPGADLGPLITPQAKERVCNLIDSGTKEGASILLDGRSIKVKGYENGNFVGPTIISNVKPNMTCYKEEIFGPVLVVLETDTLDEAIKIVNDNPYGNGTAIFTTNGATARKYSHLVDVGQVGVNVPIPVPLPMFSFTGSRASFRGDTNFYGKQGIQFYTQLKTITSQWKEEDASLSSPAVVMPTMGR.

Residues 1 to 34 (MAAVAVAAAAAALRARILQVSSKVNSSWQPASSF) constitute a mitochondrion transit peptide. Lysine 49, lysine 54, lysine 57, and lysine 78 each carry N6-acetyllysine; alternate. Residues lysine 49, lysine 54, lysine 57, and lysine 78 each carry the N6-succinyllysine; alternate modification. An N6-acetyllysine modification is found at lysine 89. Residues lysine 119 and lysine 131 each carry the N6-acetyllysine; alternate modification. 2 positions are modified to N6-succinyllysine; alternate: lysine 119 and lysine 131. NAD(+) is bound by residues alanine 185, phenylalanine 187, lysine 211, glutamate 214, arginine 215, and serine 264. Serine 264 bears the Phosphoserine mark. At lysine 300 the chain carries N6-acetyllysine. Catalysis depends on cysteine 319, which acts as the Nucleophile. N6-acetyllysine occurs at positions 332 and 333. Residues lysine 366 and lysine 378 each carry the N6-acetyllysine; alternate modification. An N6-succinyllysine; alternate mark is found at lysine 366 and lysine 378. At serine 382 the chain carries Phosphoserine. The residue at position 393 (lysine 393) is an N6-succinyllysine. Residue glutamate 419 coordinates NAD(+). Lysine 502 is modified (N6-acetyllysine). Lysine 519 is subject to N6-succinyllysine.

This sequence belongs to the aldehyde dehydrogenase family. As to quaternary structure, homodimer. Post-translationally, the N-terminus is blocked.

It localises to the mitochondrion. It carries out the reaction 2-methyl-3-oxopropanoate + NAD(+) + CoA + H2O = propanoyl-CoA + hydrogencarbonate + NADH + H(+). It catalyses the reaction 3-oxopropanoate + NAD(+) + CoA + H2O = hydrogencarbonate + acetyl-CoA + NADH + H(+). The enzyme catalyses (R)-2-methyl-3-oxopropanoate + NAD(+) + CoA + H2O = propanoyl-CoA + hydrogencarbonate + NADH + H(+). The catalysed reaction is (S)-2-methyl-3-oxopropanoate + NAD(+) + CoA + H2O = propanoyl-CoA + hydrogencarbonate + NADH + H(+). Malonate and methylmalonate semialdehyde dehydrogenase involved in the catabolism of valine, thymine, and compounds catabolized by way of beta-alanine, including uracil and cytidine. The protein is Methylmalonate-semialdehyde/malonate-semialdehyde dehydrogenase [acylating], mitochondrial (ALDH6A1) of Bos taurus (Bovine).